We begin with the raw amino-acid sequence, 954 residues long: Glucosidase 2 subunit alpha (954 aa).

The signal sequence occupies residues 1 to 22 (MVLLKWLVCQLVFFTAFSHAFT). N-linked (GlcNAc...) asparagine glycans are attached at residues asparagine 114, asparagine 126, asparagine 142, asparagine 173, and asparagine 345. The active-site Nucleophile is aspartate 537. The active site involves glutamate 540. Catalysis depends on aspartate 614, which acts as the Proton donor. Residues asparagine 783, asparagine 791, asparagine 867, asparagine 880, asparagine 907, and asparagine 941 are each glycosylated (N-linked (GlcNAc...) asparagine).

It belongs to the glycosyl hydrolase 31 family. In terms of assembly, heterodimer of a catalytic subunit alpha (ROT2) and a subunit beta (GTB1).

It is found in the endoplasmic reticulum. It carries out the reaction N(4)-(alpha-D-Glc-(1-&gt;3)-alpha-D-Man-(1-&gt;2)-alpha-D-Man-(1-&gt;2)-alpha-D-Man-(1-&gt;3)-[alpha-D-Man-(1-&gt;2)-alpha-D-Man-(1-&gt;3)-[alpha-D-Man-(1-&gt;2)-alpha-D-Man-(1-&gt;6)]-alpha-D-Man-(1-&gt;6)]-beta-D-Man-(1-&gt;4)-beta-D-GlcNAc-(1-&gt;4)-beta-D-GlcNAc)-L-asparaginyl-[protein] + H2O = N(4)-(alpha-D-Man-(1-&gt;2)-alpha-D-Man-(1-&gt;2)-alpha-D-Man-(1-&gt;3)-[alpha-D-Man-(1-&gt;2)-alpha-D-Man-(1-&gt;3)-[alpha-D-Man-(1-&gt;2)-alpha-D-Man-(1-&gt;6)]-alpha-D-Man-(1-&gt;6)]-beta-D-Man-(1-&gt;4)-beta-D-GlcNAc-(1-&gt;4)-beta-D-GlcNAc)-L-asparaginyl-[protein] (N-glucan mannose isomer 9A1,2,3B1,2,3) + beta-D-glucose. It catalyses the reaction N(4)-(alpha-D-Glc-(1-&gt;3)-alpha-D-Glc-(1-&gt;3)-alpha-D-Man-(1-&gt;2)-alpha-D-Man-(1-&gt;2)-alpha-D-Man-(1-&gt;3)-[alpha-D-Man-(1-&gt;2)-alpha-D-Man-(1-&gt;3)-[alpha-D-Man-(1-&gt;2)-alpha-D-Man-(1-&gt;6)]-alpha-D-Man-(1-&gt;6)]-beta-D-Man-(1-&gt;4)-beta-D-GlcNAc-(1-&gt;4)-beta-D-GlcNAc)-L-asparaginyl-[protein] + H2O = N(4)-(alpha-D-Glc-(1-&gt;3)-alpha-D-Man-(1-&gt;2)-alpha-D-Man-(1-&gt;2)-alpha-D-Man-(1-&gt;3)-[alpha-D-Man-(1-&gt;2)-alpha-D-Man-(1-&gt;3)-[alpha-D-Man-(1-&gt;2)-alpha-D-Man-(1-&gt;6)]-alpha-D-Man-(1-&gt;6)]-beta-D-Man-(1-&gt;4)-beta-D-GlcNAc-(1-&gt;4)-beta-D-GlcNAc)-L-asparaginyl-[protein] + beta-D-glucose. It functions in the pathway glycan metabolism; N-glycan metabolism. With respect to regulation, inhibited by glucose, maltose and nigerose, and by the antibiotic deoxynojirimycin. Functionally, catalytic subunit of glucosidase 2, which cleaves sequentially the 2 innermost alpha-1,3-linked glucose residues from the Glc(2)Man(9)GlcNAc(2) oligosaccharide precursor of immature glycoproteins. The sequence is that of Glucosidase 2 subunit alpha (ROT2) from Saccharomyces cerevisiae (strain ATCC 204508 / S288c) (Baker's yeast).